A 160-amino-acid chain; its full sequence is Small ribosomal subunit protein bS6 (160 aa).

Composition is skewed to basic and acidic residues over residues 94–119 (EEHE…RGGR) and 125–152 (RGDR…REDA). The tract at residues 94 to 160 (EEHEEGPSAM…DADTAAASEE (67 aa)) is disordered.

The protein belongs to the bacterial ribosomal protein bS6 family.

In terms of biological role, binds together with bS18 to 16S ribosomal RNA. The sequence is that of Small ribosomal subunit protein bS6 from Rhodopseudomonas palustris (strain BisB5).